Consider the following 426-residue polypeptide: Adenylosuccinate synthetase (426 aa).

GTP contacts are provided by residues 12 to 18 and 40 to 42; these read GDEGKGK and GHT. D13 serves as the catalytic Proton acceptor. 2 residues coordinate Mg(2+): D13 and G40. Residues 13 to 16, 38 to 41, T131, R145, Q226, T241, and R305 each bind IMP; these read DEGK and NAGH. H41 functions as the Proton donor in the catalytic mechanism. 301 to 307 serves as a coordination point for substrate; the sequence is ATTGRKR. Residues R307, 333–335, and 415–417 each bind GTP; these read KLD and SVG.

It belongs to the adenylosuccinate synthetase family. Homodimer. It depends on Mg(2+) as a cofactor.

It is found in the cytoplasm. It catalyses the reaction IMP + L-aspartate + GTP = N(6)-(1,2-dicarboxyethyl)-AMP + GDP + phosphate + 2 H(+). It functions in the pathway purine metabolism; AMP biosynthesis via de novo pathway; AMP from IMP: step 1/2. In terms of biological role, plays an important role in the de novo pathway of purine nucleotide biosynthesis. Catalyzes the first committed step in the biosynthesis of AMP from IMP. The sequence is that of Adenylosuccinate synthetase from Nitratidesulfovibrio vulgaris (strain ATCC 29579 / DSM 644 / CCUG 34227 / NCIMB 8303 / VKM B-1760 / Hildenborough) (Desulfovibrio vulgaris).